The primary structure comprises 565 residues: Dihydroxy-acid dehydratase (565 aa).

Asp80 is a Mg(2+) binding site. Cys121 lines the [2Fe-2S] cluster pocket. Asp122 and Lys123 together coordinate Mg(2+). Lys123 is subject to N6-carboxylysine. Cys194 serves as a coordination point for [2Fe-2S] cluster. Glu447 serves as a coordination point for Mg(2+). Ser473 (proton acceptor) is an active-site residue.

Belongs to the IlvD/Edd family. In terms of assembly, homodimer. [2Fe-2S] cluster is required as a cofactor. It depends on Mg(2+) as a cofactor.

It catalyses the reaction (2R)-2,3-dihydroxy-3-methylbutanoate = 3-methyl-2-oxobutanoate + H2O. The catalysed reaction is (2R,3R)-2,3-dihydroxy-3-methylpentanoate = (S)-3-methyl-2-oxopentanoate + H2O. It functions in the pathway amino-acid biosynthesis; L-isoleucine biosynthesis; L-isoleucine from 2-oxobutanoate: step 3/4. Its pathway is amino-acid biosynthesis; L-valine biosynthesis; L-valine from pyruvate: step 3/4. Functions in the biosynthesis of branched-chain amino acids. Catalyzes the dehydration of (2R,3R)-2,3-dihydroxy-3-methylpentanoate (2,3-dihydroxy-3-methylvalerate) into 2-oxo-3-methylpentanoate (2-oxo-3-methylvalerate) and of (2R)-2,3-dihydroxy-3-methylbutanoate (2,3-dihydroxyisovalerate) into 2-oxo-3-methylbutanoate (2-oxoisovalerate), the penultimate precursor to L-isoleucine and L-valine, respectively. In Chlorobium phaeovibrioides (strain DSM 265 / 1930) (Prosthecochloris vibrioformis (strain DSM 265)), this protein is Dihydroxy-acid dehydratase.